Consider the following 64-residue polypeptide: Conotoxin Ca5.3 (64 aa).

The signal sequence occupies residues 1–22; it reads MRCVPVFIILLLLIASAPGVDA. The propeptide occupies 23–48; that stretch reads QPKTKYNAPLTSLHDNAKGILQEHWN. Position 61 is an isoleucine amide (I61).

It belongs to the conotoxin T superfamily. Contains 2 disulfide bonds that can be either 'C1-C3, C2-C4' or 'C1-C4, C2-C3', since these disulfide connectivities have been observed for conotoxins with cysteine framework V (for examples, see AC P0DQQ7 and AC P81755). As to expression, expressed by the venom duct.

It localises to the secreted. The sequence is that of Conotoxin Ca5.3 from Conus caracteristicus (Characteristic cone).